The chain runs to 1411 residues: Uveal autoantigen with coiled-coil domains and ankyrin repeats (1411 aa).

At M1 the chain carries N-acetylmethionine. Residues 1–30 (MKSLKSRLWKQDAPGPTSPSSPTAVASTQS) are disordered. Residues 13 to 30 (APGPTSPSSPTAVASTQS) show a composition bias toward low complexity. ANK repeat units lie at residues 69–98 (EGRS…DVAT), 102–131 (AGRN…PTEH), 135–164 (QGRT…SVNA), 168–197 (DGRT…DVNS), 201–230 (QNRT…DLTL), and 234–263 (LGHD…NTNK). A disordered region spans residues 263 to 301 (KGRELWRKGPPLQQRNLSHTQDEGSVKSTQREQREPHSF). At S280 the chain carries Phosphoserine. Over residues 282 to 301 (TQDEGSVKSTQREQREPHSF) the composition is skewed to basic and acidic residues. Coiled coils occupy residues 299–379 (HSFQ…NRFK), 442–624 (SENE…LKEL), and 652–1380 (VKRL…AIYR). Positions 1006–1031 (GLKEQLSEQTHKCRQRDEEVKKGKQE) are disordered.

Component of the apoptosome complex, composed of APAF1, pro-caspase-9 and UACA. In the complex, it probably interacts directly with APAF1. Interacts with LGALS3, ARF6 and ACTB. Interacts with RAB39A. As to expression, highly expressed in heart, liver, kidney and testis. Weakly expressed in lung and skeletal muscle. Not expressed in brain and spleen.

The protein resides in the nucleus. Its subcellular location is the cytoplasm. The protein localises to the cytoskeleton. Regulates APAF1 expression and plays an important role in the regulation of stress-induced apoptosis. Promotes apoptosis by regulating three pathways, apoptosome up-regulation, LGALS3/galectin-3 down-regulation and NF-kappa-B inactivation. Regulates the redistribution of APAF1 into the nucleus after proapoptotic stress. Down-regulates the expression of LGALS3 by inhibiting NFKB1. Its function is as follows. Modulates isoactin dynamics to regulate the morphological alterations required for cell growth and motility. Interaction with ARF6 may modulate cell shape and motility after injury. May be involved in multiple neurite formation. This is Uveal autoantigen with coiled-coil domains and ankyrin repeats (Uaca) from Mus musculus (Mouse).